A 546-amino-acid chain; its full sequence is Chaperonin GroEL (546 aa).

Residues 30–33 (TLGP), Lys-51, 87–91 (DGTTT), Gly-415, 479–481 (NAA), and Asp-495 contribute to the ATP site. Residues 526-546 (KEEKPDLSGAGAGMGGMGGMM) form a disordered region. The span at 535 to 546 (AGAGMGGMGGMM) shows a compositional bias: gly residues.

Belongs to the chaperonin (HSP60) family. Forms a cylinder of 14 subunits composed of two heptameric rings stacked back-to-back. Interacts with the co-chaperonin GroES.

It localises to the cytoplasm. It catalyses the reaction ATP + H2O + a folded polypeptide = ADP + phosphate + an unfolded polypeptide.. Functionally, together with its co-chaperonin GroES, plays an essential role in assisting protein folding. The GroEL-GroES system forms a nano-cage that allows encapsulation of the non-native substrate proteins and provides a physical environment optimized to promote and accelerate protein folding. In Wigglesworthia glossinidia brevipalpis, this protein is Chaperonin GroEL.